Reading from the N-terminus, the 237-residue chain is tRNA1(Val) (adenine(37)-N6)-methyltransferase (237 aa).

Belongs to the methyltransferase superfamily. tRNA (adenine-N(6)-)-methyltransferase family.

The protein localises to the cytoplasm. The catalysed reaction is adenosine(37) in tRNA1(Val) + S-adenosyl-L-methionine = N(6)-methyladenosine(37) in tRNA1(Val) + S-adenosyl-L-homocysteine + H(+). Specifically methylates the adenine in position 37 of tRNA(1)(Val) (anticodon cmo5UAC). The chain is tRNA1(Val) (adenine(37)-N6)-methyltransferase from Bacteroides fragilis (strain ATCC 25285 / DSM 2151 / CCUG 4856 / JCM 11019 / LMG 10263 / NCTC 9343 / Onslow / VPI 2553 / EN-2).